The following is a 168-amino-acid chain: Cell division inhibitor SulA (168 aa).

Residues 105–111 (ALETGNY) are ftsZ binding. A lon protease binding region spans residues 161 to 168 (RIHSRMVH).

This sequence belongs to the SulA family. As to quaternary structure, interacts with FtsZ. In terms of processing, is rapidly cleaved and degraded by the Lon protease once DNA damage is repaired.

Component of the SOS system and an inhibitor of cell division. Accumulation of SulA causes rapid cessation of cell division and the appearance of long, non-septate filaments. In the presence of GTP, binds a polymerization-competent form of FtsZ in a 1:1 ratio, thus inhibiting FtsZ polymerization and therefore preventing it from participating in the assembly of the Z ring. This mechanism prevents the premature segregation of damaged DNA to daughter cells during cell division. This chain is Cell division inhibitor SulA, found in Cronobacter turicensis (strain DSM 18703 / CCUG 55852 / LMG 23827 / z3032).